A 320-amino-acid polypeptide reads, in one-letter code: Peptidase 1 (320 aa).

Positions 1-18 are cleaved as a signal peptide; it reads MKIVLAIASLLALSAVYA. The propeptide at 19 to 98 is activation peptide; that stretch reads RPSSIKTFEE…LKTQFDLNAE (80 aa). 3 disulfides stabilise this stretch: Cys-102–Cys-215, Cys-129–Cys-169, and Cys-163–Cys-201. Cys-132 is a catalytic residue. A glycan (N-linked (GlcNAc...) asparagine) is linked at Asn-150. Catalysis depends on residues His-268 and Asn-288.

This sequence belongs to the peptidase C1 family. Post-translationally, N-glycosylated. N-glycanase treatment does not completely remove carbohydrates, suggesting that the protein contains additional glycosylation sites.

The protein resides in the secreted. It carries out the reaction Broad endopeptidase specificity.. In terms of biological role, thiol protease, with a preference for substrates with a large hydrophobic side chain in the P2 position, or with basic residues. The protein is Peptidase 1 (DERP1) of Dermatophagoides pteronyssinus (European house dust mite).